A 283-amino-acid polypeptide reads, in one-letter code: MAESVAHPSVLNATEEDIKQLLAASCHIGSKNLDVRMENYVWKRRADGVNIINIGKTWEKIVLAARVIATIENPADVCVISARPYGHRAVLKFAAHTGATAIAGRFTPGNFTNYITRTYREPRLIVVTDPRADHQAIKEASYVNIPVIALCDTDSPLAHVDIAIPTNNKGYKSIGLVWWLLAREVLRLRGALSRTAPWDIMVDMYFYRDPEAEREEEAKAVEAEAEAPAVEAAEFEPTAEGAVDPSILAAATAGQVGQSAWDEEGDWNTTGAAQTSDWANTVA.

Positions 254–283 (GQVGQSAWDEEGDWNTTGAAQTSDWANTVA) are disordered. The span at 267–283 (WNTTGAAQTSDWANTVA) shows a compositional bias: polar residues.

The protein belongs to the universal ribosomal protein uS2 family. As to quaternary structure, component of the small ribosomal subunit. Mature ribosomes consist of a small (40S) and a large (60S) subunit. The 40S subunit contains about 33 different proteins and 1 molecule of RNA (18S). The 60S subunit contains about 49 different proteins and 3 molecules of RNA (25S, 5.8S and 5S). Interacts with rps21.

It localises to the cytoplasm. Functionally, required for the assembly and/or stability of the 40S ribosomal subunit. Required for the processing of the 20S rRNA-precursor to mature 18S rRNA in a late step of the maturation of 40S ribosomal subunits. The protein is Small ribosomal subunit protein uS2B (rps0b) of Schizosaccharomyces japonicus (strain yFS275 / FY16936) (Fission yeast).